The following is a 253-amino-acid chain: MQQNTSATAQPGSTVDAAEIAKFSKLSAEWWDPKGKMAPLHRINPLRLGYIRDAACRKFERNVRSLNCLGGLRVLDIGCGAGLLCEPLSRLGAQVIGVDPSQSNIAAAKLHADKSHLAIDYRCTTVEEIDPRERFDIVLAMEVVEHVVDVGVFLKRCAAMLKPNGLMVVSTLNRNWKSFALAIVGAEYVLRWLPRGTHEWNKFVTPDELTKYLLDNRLVITEQTGVVYSPFADKWTLSSDMDVNYMVVAEGMV.

Residues Arg47, Gly78, Asp99, and Met141 each coordinate S-adenosyl-L-methionine.

It belongs to the methyltransferase superfamily. UbiG/COQ3 family.

It carries out the reaction a 3-demethylubiquinol + S-adenosyl-L-methionine = a ubiquinol + S-adenosyl-L-homocysteine + H(+). The enzyme catalyses a 3-(all-trans-polyprenyl)benzene-1,2-diol + S-adenosyl-L-methionine = a 2-methoxy-6-(all-trans-polyprenyl)phenol + S-adenosyl-L-homocysteine + H(+). It participates in cofactor biosynthesis; ubiquinone biosynthesis. Its function is as follows. O-methyltransferase that catalyzes the 2 O-methylation steps in the ubiquinone biosynthetic pathway. The sequence is that of Ubiquinone biosynthesis O-methyltransferase from Bradyrhizobium diazoefficiens (strain JCM 10833 / BCRC 13528 / IAM 13628 / NBRC 14792 / USDA 110).